The primary structure comprises 293 residues: Pyridoxal 5'-phosphate synthase subunit PdxS (293 aa).

Aspartate 23 provides a ligand contact to D-ribose 5-phosphate. Lysine 80 (schiff-base intermediate with D-ribose 5-phosphate) is an active-site residue. Glycine 152 contributes to the D-ribose 5-phosphate binding site. Residue arginine 164 participates in D-glyceraldehyde 3-phosphate binding. Residues glycine 213 and 234–235 contribute to the D-ribose 5-phosphate site; that span reads GS.

Belongs to the PdxS/SNZ family. In the presence of PdxT, forms a dodecamer of heterodimers.

It carries out the reaction aldehydo-D-ribose 5-phosphate + D-glyceraldehyde 3-phosphate + L-glutamine = pyridoxal 5'-phosphate + L-glutamate + phosphate + 3 H2O + H(+). The protein operates within cofactor biosynthesis; pyridoxal 5'-phosphate biosynthesis. In terms of biological role, catalyzes the formation of pyridoxal 5'-phosphate from ribose 5-phosphate (RBP), glyceraldehyde 3-phosphate (G3P) and ammonia. The ammonia is provided by the PdxT subunit. Can also use ribulose 5-phosphate and dihydroxyacetone phosphate as substrates, resulting from enzyme-catalyzed isomerization of RBP and G3P, respectively. This is Pyridoxal 5'-phosphate synthase subunit PdxS from Roseiflexus castenholzii (strain DSM 13941 / HLO8).